Here is a 240-residue protein sequence, read N- to C-terminus: Glutamine amidotransferase-like protein chry6 (240 aa).

The Glutamine amidotransferase type-1 domain maps to 13 to 205 (NFILDDTGGR…FVASDNPVLV (193 aa)). The active-site Nucleophile is the C102. Catalysis depends on residues H185 and E187.

Belongs to the peptidase C26 family.

Its pathway is pigment biosynthesis. Its function is as follows. Glutamine amidotransferase-like protein; part of the gene cluster that mediates the biosynthesis of the yellow pigment chrysogine. Pyruvic acid and anthranilic acid are likely substrates for the nonribosomal peptide synthetase chry1/NRPS14, with pyruvic acid adenylated by the first A domain and anthranilic acid by the second. If pyruvic acid and anthranilic acid are merged and released from chry1/NRPS14 by hydrolysis, a subsequent amidation would lead to 2-pyruvoylaminobenzamide. This process is probably catalyzed by the amidotransferase chry2 using glutamine as amino donor. The dehydrogenase chry5 that has a terminal berberine bridge domain for C-N cyclization could catalyze the cyclization of 2-pyruvoylaminobenzamide to yield acetyl-4(3H)-quinazolidinone. A final reduction of acetyl-4(3H)-quinazolidinone catalyzed by the oxidoreductase chry4 would result in chrysogine. The chain is Glutamine amidotransferase-like protein chry6 from Gibberella zeae (strain ATCC MYA-4620 / CBS 123657 / FGSC 9075 / NRRL 31084 / PH-1) (Wheat head blight fungus).